A 240-amino-acid polypeptide reads, in one-letter code: Guanylate kinase (240 aa).

Residues 56–236 enclose the Guanylate kinase-like domain; it reads GRIFVITGPS…TLNELKSILL (181 aa). 63-70 lines the ATP pocket; sequence GPSGVGKS.

It belongs to the guanylate kinase family.

Its subcellular location is the cytoplasm. The catalysed reaction is GMP + ATP = GDP + ADP. Functionally, essential for recycling GMP and indirectly, cGMP. The protein is Guanylate kinase (gmk) of Mycoplasma genitalium (strain ATCC 33530 / DSM 19775 / NCTC 10195 / G37) (Mycoplasmoides genitalium).